A 362-amino-acid polypeptide reads, in one-letter code: NAC domain-containing protein 5 (362 aa).

The 149-residue stretch at 3–151 (NPVGFRFRPT…TYTLCKVKFK (149 aa)) folds into the NAC domain. The DNA-binding element occupies 107–157 (IGEKRVLVFKNHGGSKSDWAMHEYHATFSSPNQIMTYTLCKVKFKGERREF). The tract at residues 240 to 266 (DDRNNHTPQKPLTGVFSDHSTDGSDSD) is disordered.

Its subcellular location is the nucleus. This Arabidopsis thaliana (Mouse-ear cress) protein is NAC domain-containing protein 5 (NAC005).